The primary structure comprises 72 residues: Translation initiation factor IF-1 (72 aa).

The S1-like domain maps to 1-72; it reads MARDDVIEVD…DKGRITFRYK (72 aa).

Belongs to the IF-1 family. In terms of assembly, component of the 30S ribosomal translation pre-initiation complex which assembles on the 30S ribosome in the order IF-2 and IF-3, IF-1 and N-formylmethionyl-tRNA(fMet); mRNA recruitment can occur at any time during PIC assembly.

It is found in the cytoplasm. One of the essential components for the initiation of protein synthesis. Stabilizes the binding of IF-2 and IF-3 on the 30S subunit to which N-formylmethionyl-tRNA(fMet) subsequently binds. Helps modulate mRNA selection, yielding the 30S pre-initiation complex (PIC). Upon addition of the 50S ribosomal subunit IF-1, IF-2 and IF-3 are released leaving the mature 70S translation initiation complex. The polypeptide is Translation initiation factor IF-1 (Helicobacter pylori (strain HPAG1)).